We begin with the raw amino-acid sequence, 126 residues long: Small ribosomal subunit protein uS13c (126 aa).

The disordered stretch occupies residues 97–126 (PLRGQRTRTNARTRRGGKKTVAGKKKAPRK). Residues 101–126 (QRTRTNARTRRGGKKTVAGKKKAPRK) are compositionally biased toward basic residues.

Belongs to the universal ribosomal protein uS13 family. In terms of assembly, part of the 30S ribosomal subunit.

The protein localises to the plastid. The protein resides in the chloroplast. Located at the top of the head of the 30S subunit, it contacts several helices of the 16S rRNA. The sequence is that of Small ribosomal subunit protein uS13c from Pyropia yezoensis (Susabi-nori).